We begin with the raw amino-acid sequence, 240 residues long: Ribonuclease 3 (240 aa).

Residues 9–141 (VEEFQKKTGI…LLAAIYLDQG (133 aa)) form the RNase III domain. Residue Glu54 participates in Mg(2+) binding. Asp58 is a catalytic residue. Positions 127 and 130 each coordinate Mg(2+). Glu130 is an active-site residue. In terms of domain architecture, DRBM spans 168 to 237 (DYKTALQEIV…ARIAYEKLLK (70 aa)).

It belongs to the ribonuclease III family. In terms of assembly, homodimer. Mg(2+) serves as cofactor.

The protein localises to the cytoplasm. It catalyses the reaction Endonucleolytic cleavage to 5'-phosphomonoester.. Its function is as follows. Digests double-stranded RNA. Involved in the processing of primary rRNA transcript to yield the immediate precursors to the large and small rRNAs (23S and 16S). Processes some mRNAs, and tRNAs when they are encoded in the rRNA operon. Processes pre-crRNA and tracrRNA of type II CRISPR loci if present in the organism. The chain is Ribonuclease 3 from Thermotoga sp. (strain RQ2).